The following is a 156-amino-acid chain: U4/U6.U5 small nuclear ribonucleoprotein 27 kDa protein (156 aa).

A disordered region spans residues 1-98; it reads MGRSRSRSPE…IAAEDLEGKT (98 aa). The span at 13–59 shows a compositional bias: basic residues; it reads RERRRSRSASRERERRRRERSRSRERRRSRSRSPHRRRSRSPRRHRS. Residues 66 to 98 show a composition bias toward basic and acidic residues; sequence RLKDRRDDDKKDSKESKGAKERQIAAEDLEGKT.

The protein belongs to the SNUT3 family. In terms of assembly, part of a tri-snRNP complex.

The protein localises to the nucleus. May play a role in mRNA splicing. The chain is U4/U6.U5 small nuclear ribonucleoprotein 27 kDa protein (snrnp27) from Xenopus tropicalis (Western clawed frog).